A 330-amino-acid polypeptide reads, in one-letter code: MGKGILSLQQEMPLEYIGKSYQEVLKIRQESYWKRMRSFSLFEVIMHWTASLNQHTCRSYRGSFLALEKIGLLSLDMNLQEFSLLNHNLILDAIKKIPSSKASWTEGTKQVRAASYISLTRFLNRMTQGIVSIAQPSKQENSRTFFKTREIVKTNAMNRLQTASFLKELKKINPRDWLIAQTMLQGGKRSSEVLSLEIDQICFQQATISFSQLKNRQTEKRIIITYPQKFMHALREYIGPRRGLVFVTSSGKMVGLRQIARTFSQAGLQASIPFKITPHVLRATAVTEYKRLGCSDSDIMKVTGHTTAKMVFAYDKSSREDNASKKMALI.

Residues 39 to 124 (FSLFEVIMHW…SYISLTRFLN (86 aa)) form the Core-binding (CB) domain. A Tyr recombinase domain is found at 152–327 (VKTNAMNRLQ…SREDNASKKM (176 aa)). Catalysis depends on residues Arg189, Lys214, His279, Arg282, and His305. The active-site O-(3'-phospho-DNA)-tyrosine intermediate is Tyr314.

The protein belongs to the 'phage' integrase family.

The protein is Virulence plasmid integrase pGP8-D of Chlamydia muridarum (strain MoPn / Nigg).